A 351-amino-acid chain; its full sequence is Putative aryl-alcohol dehydrogenase C977.14c (351 aa).

Position 113 is a phosphoserine (serine 113).

It belongs to the aldo/keto reductase family. Aldo/keto reductase 2 subfamily.

It localises to the cytoplasm. It is found in the nucleus. This is Putative aryl-alcohol dehydrogenase C977.14c from Schizosaccharomyces pombe (strain 972 / ATCC 24843) (Fission yeast).